The primary structure comprises 584 residues: 65 kDa membrane protein (584 aa).

The first 30 residues, Met-1 to Ala-30, serve as a signal peptide directing secretion. MAP repeat units lie at residues Gly-45–Lys-154, Asp-156–Ala-265, Lys-266–Arg-374, Tyr-375–Lys-474, and Ala-475–Lys-584.

Its subcellular location is the cell membrane. Binds various plasma and ECM-proteins. The chain is 65 kDa membrane protein from Staphylococcus aureus (strain Newman).